The chain runs to 261 residues: MSLPGSFDLTPEDAKLLLAANVHLGSKNVQVHNKPYVYKTRPDGVNVINVGKTWEKIVLAARIIAAIPNAADVAVCSTRTFGQRAVLKFAAHTGATPIAGRFTPGNFTNYITRSFKEPRLVVVTDPRTDFQAIKESSYVNIPVIALTDMDSPSEYVDVAIPCNNKGKHSIGLIWWLVAREVLRLRGIIPDRTTEWSVMPDLYFYRDPEEIEQNATEDIKTDDVEEAPAADAETEWTGETEEVDWAESGATPAAEEAAASNW.

The residue at position 2 (S2) is an N-acetylserine. Positions 214 to 261 (ATEDIKTDDVEEAPAADAETEWTGETEEVDWAESGATPAAEEAAASNW) are disordered. Acidic residues predominate over residues 222–244 (DVEEAPAADAETEWTGETEEVDW). Residues 245–261 (AESGATPAAEEAAASNW) are compositionally biased toward low complexity.

This sequence belongs to the universal ribosomal protein uS2 family. In terms of assembly, component of the small ribosomal subunit. Mature ribosomes consist of a small (40S) and a large (60S) subunit. The 40S subunit contains about 33 different proteins and 1 molecule of RNA (18S). The 60S subunit contains about 49 different proteins and 3 molecules of RNA (25S, 5.8S and 5S). Interacts with RPS21.

It is found in the cytoplasm. Required for the assembly and/or stability of the 40S ribosomal subunit. Required for the processing of the 20S rRNA-precursor to mature 18S rRNA in a late step of the maturation of 40S ribosomal subunits. The polypeptide is Small ribosomal subunit protein uS2 (Debaryomyces hansenii (strain ATCC 36239 / CBS 767 / BCRC 21394 / JCM 1990 / NBRC 0083 / IGC 2968) (Yeast)).